A 470-amino-acid chain; its full sequence is Neuraminidase (470 aa).

The Intravirion segment spans residues 1 to 6; it reads MNPNQK. Residues 7–27 form a helical membrane-spanning segment; that stretch reads IITIGSISIAIGIISLMLQIG. The tract at residues 11–33 is involved in apical transport and lipid raft association; sequence GSISIAIGIISLMLQIGNIISMW. Topologically, residues 28–470 are virion surface; that stretch reads NIISMWASHS…GAELPFTIDK (443 aa). Residues 36–90 form a hypervariable stalk region region; it reads HSIQTGSQNHTGICNQRIITYENSTWVNHTYVNINNTNVVTGKDKTSVTLAGNSS. Residues Asn44, Asn58, Asn63, Asn70, and Asn88 are each glycosylated (N-linked (GlcNAc...) asparagine; by host). Residues 91 to 470 are head of neuraminidase; it reads LCSISGWAIY…GAELPFTIDK (380 aa). 8 disulfides stabilise this stretch: Cys92–Cys417, Cys124–Cys129, Cys184–Cys231, Cys233–Cys238, Cys279–Cys292, Cys281–Cys290, Cys318–Cys335, and Cys421–Cys447. Arg118 contacts substrate. The N-linked (GlcNAc...) asparagine; by host glycan is linked to Asn146. The active-site Proton donor/acceptor is the Asp151. Arg152 contributes to the substrate binding site. N-linked (GlcNAc...) asparagine; by host glycosylation occurs at Asn235. Substrate is bound at residue 277 to 278; that stretch reads EE. Substrate is bound at residue Arg293. Asp294, Gly298, and Asp324 together coordinate Ca(2+). Arg368 is a binding site for substrate. Residue Tyr402 is the Nucleophile of the active site. N-linked (GlcNAc...) asparagine; by host glycosylation is found at Asn434 and Asn455.

The protein belongs to the glycosyl hydrolase 34 family. As to quaternary structure, homotetramer. Requires Ca(2+) as cofactor. In terms of processing, N-glycosylated.

Its subcellular location is the virion membrane. The protein resides in the host apical cell membrane. It catalyses the reaction Hydrolysis of alpha-(2-&gt;3)-, alpha-(2-&gt;6)-, alpha-(2-&gt;8)- glycosidic linkages of terminal sialic acid residues in oligosaccharides, glycoproteins, glycolipids, colominic acid and synthetic substrates.. Inhibited by the neuraminidase inhibitors zanamivir (Relenza) and oseltamivir (Tamiflu). These drugs interfere with the release of progeny virus from infected cells and are effective against all influenza strains. Resistance to neuraminidase inhibitors is quite rare. Its function is as follows. Catalyzes the removal of terminal sialic acid residues from viral and cellular glycoconjugates. Cleaves off the terminal sialic acids on the glycosylated HA during virus budding to facilitate virus release. Additionally helps virus spread through the circulation by further removing sialic acids from the cell surface. These cleavages prevent self-aggregation and ensure the efficient spread of the progeny virus from cell to cell. Otherwise, infection would be limited to one round of replication. Described as a receptor-destroying enzyme because it cleaves a terminal sialic acid from the cellular receptors. May facilitate viral invasion of the upper airways by cleaving the sialic acid moieties on the mucin of the airway epithelial cells. Likely to plays a role in the budding process through its association with lipid rafts during intracellular transport. May additionally display a raft-association independent effect on budding. Plays a role in the determination of host range restriction on replication and virulence. Sialidase activity in late endosome/lysosome traffic seems to enhance virus replication. The sequence is that of Neuraminidase from Aves (Human).